We begin with the raw amino-acid sequence, 424 residues long: D-inositol 3-phosphate glycosyltransferase (424 aa).

A 1D-myo-inositol 3-phosphate-binding site is contributed by His-20. Residues 26-27 (QP) and Gly-34 each bind UDP-N-acetyl-alpha-D-glucosamine. 1D-myo-inositol 3-phosphate contacts are provided by residues 31-36 (DAGGMN), Lys-89, Tyr-122, Thr-146, and Arg-166. Arg-240, Lys-245, and Met-306 together coordinate UDP-N-acetyl-alpha-D-glucosamine. Mg(2+) contacts are provided by Tyr-315, Arg-316, and Ala-318. Positions 328 and 336 each coordinate UDP-N-acetyl-alpha-D-glucosamine. Residue Thr-342 participates in Mg(2+) binding.

Belongs to the glycosyltransferase group 1 family. MshA subfamily. As to quaternary structure, homodimer.

The catalysed reaction is 1D-myo-inositol 3-phosphate + UDP-N-acetyl-alpha-D-glucosamine = 1D-myo-inositol 2-acetamido-2-deoxy-alpha-D-glucopyranoside 3-phosphate + UDP + H(+). In terms of biological role, catalyzes the transfer of a N-acetyl-glucosamine moiety to 1D-myo-inositol 3-phosphate to produce 1D-myo-inositol 2-acetamido-2-deoxy-glucopyranoside 3-phosphate in the mycothiol biosynthesis pathway. In Kribbella flavida (strain DSM 17836 / JCM 10339 / NBRC 14399), this protein is D-inositol 3-phosphate glycosyltransferase.